Consider the following 362-residue polypeptide: Sulfoquinovose monooxygenase (362 aa).

The protein belongs to the SsuD family.

It carries out the reaction 6-sulfo-D-quinovose + FMNH2 + O2 = 6-dehydro-D-glucose + FMN + sulfite + H2O + 2 H(+). Part of the alkanesulfonate monooxygenase (sulfo-ASMO) pathway, a D-sulfoquinovose degradation pathway that enables the complete utilization of all carbons within sulfoquinovose (SQ) with concomitant production of inorganic sulfite. Catalyzes the oxidative desulfurization of sulfoquinovose to sulfite and 6-dehydro-D-glucose. In Novosphingobium aromaticivorans (strain ATCC 700278 / DSM 12444 / CCUG 56034 / CIP 105152 / NBRC 16084 / F199), this protein is Sulfoquinovose monooxygenase.